A 163-amino-acid polypeptide reads, in one-letter code: Endoribonuclease YbeY (163 aa).

Zn(2+) is bound by residues H121, H125, and H131.

This sequence belongs to the endoribonuclease YbeY family. Zn(2+) is required as a cofactor.

The protein localises to the cytoplasm. Its function is as follows. Single strand-specific metallo-endoribonuclease involved in late-stage 70S ribosome quality control and in maturation of the 3' terminus of the 16S rRNA. The polypeptide is Endoribonuclease YbeY (Synechococcus sp. (strain JA-2-3B'a(2-13)) (Cyanobacteria bacterium Yellowstone B-Prime)).